Reading from the N-terminus, the 115-residue chain is U3-lycotoxin-Ls1h (115 aa).

An N-terminal signal peptide occupies residues 1–20 (MKFVLLFGVFLVTLFSYSSA). Positions 21 to 44 (EMLDDFDQADEDELLSLIEKEEAR) are excised as a propeptide. Intrachain disulfides connect Cys-48/Cys-63, Cys-55/Cys-72, Cys-62/Cys-87, and Cys-74/Cys-85.

Belongs to the neurotoxin 19 (CSTX) family. 01 subfamily. Expressed by the venom gland.

It is found in the secreted. The chain is U3-lycotoxin-Ls1h from Lycosa singoriensis (Wolf spider).